The primary structure comprises 189 residues: Probable RNA 2'-phosphotransferase (189 aa).

This sequence belongs to the KptA/TPT1 family.

In terms of biological role, removes the 2'-phosphate from RNA via an intermediate in which the phosphate is ADP-ribosylated by NAD followed by a presumed transesterification to release the RNA and generate ADP-ribose 1''-2''-cyclic phosphate (APPR&gt;P). May function as an ADP-ribosylase. This is Probable RNA 2'-phosphotransferase from Streptomyces griseus subsp. griseus (strain JCM 4626 / CBS 651.72 / NBRC 13350 / KCC S-0626 / ISP 5235).